The following is a 274-amino-acid chain: Large ribosomal subunit protein uL2 (274 aa).

2 disordered regions span residues 28–55 (APHAPLLEKKSKSGGRNNNGRITTRHVG) and 224–274 (VAMN…RRRK). The span at 263–274 (KRTDKMIVRRRK) shows a compositional bias: basic and acidic residues.

Belongs to the universal ribosomal protein uL2 family. In terms of assembly, part of the 50S ribosomal subunit. Forms a bridge to the 30S subunit in the 70S ribosome.

In terms of biological role, one of the primary rRNA binding proteins. Required for association of the 30S and 50S subunits to form the 70S ribosome, for tRNA binding and peptide bond formation. It has been suggested to have peptidyltransferase activity; this is somewhat controversial. Makes several contacts with the 16S rRNA in the 70S ribosome. The protein is Large ribosomal subunit protein uL2 of Pseudomonas fluorescens (strain ATCC BAA-477 / NRRL B-23932 / Pf-5).